The following is a 671-amino-acid chain: MAIVHTLPVPLEPARETATAPKTPAMGSVSSLISGRPCPGGPAPQRHHGVPGPTFFRQQDGLLPGGYEAQEPLCPAVPPRKAVPGNSFTYVNEDFRTESPPSPSSDVEDPREHQAHNAHLRGPPPKLIPVSGKLEKNMEKILIRPTAFKPVLPKPRGAPSLPGFLGPRAAGLSGSQGSLTQLFGGPASSSSSSSSSSAADKPLALSGWASGCPSGTLSDSGRNSLSSLPTYSTGGAEPTTNSPGGHLPSHGPGRGALPGPARGVPTGPSHSDSGRSSSSKSTGSLGGRVAGGLLGSGARASPGSSSGGDRSPPPPPPPPPSDEALLHCVLEGKLRDREAELQQLRDSMDESEATVCQAFGARQRRWPRERGEDCAAQAQQATQRVQRAQQLLQLQVFQLQQEKRQLQDDFAQLLQEREQLERRCATFEREQRELGPRLEETKWEVCQKSGEISLLKQQLKESQAELVQKGSELVALRVALREARATLRVSEGRARGLQEAARAREQELEACSQELQRYRQEAERLREKAGHLDAEASGLRDPPVPPATTDPFLLAESDEAKVQRAAAGAGGSLRAQVERLRQELQREQRRGDEQRDSFEGERLAWQAEKEQVIRYQKQLQHNYIQMYRRNRQLEQELQQLSLELEARELADLGLAESAPCICLEEITATEI.

Disordered regions lie at residues 1 to 131 (MAIV…IPVS) and 149 to 324 (KPVL…SDEA). Positions 1-333 (MAIVHTLPVP…ALLHCVLEGK (333 aa)) are required for centrosomal localization. The segment covering 187–199 (ASSSSSSSSSSAA) has biased composition (low complexity). Over residues 213 to 241 (PSGTLSDSGRNSLSSLPTYSTGGAEPTTN) the composition is skewed to polar residues. Residues 242–283 (SPGGHLPSHGPGRGALPGPARGVPTGPSHSDSGRSSSSKSTG) show a composition bias toward low complexity. A Phosphoserine modification is found at Ser249. A compositionally biased stretch (gly residues) spans 284–295 (SLGGRVAGGLLG). A Phosphoserine modification is found at Ser296. Positions 296 to 310 (SGARASPGSSSGGDR) are enriched in low complexity. Over residues 311-321 (SPPPPPPPPPS) the composition is skewed to pro residues. The stretch at 329–651 (VLEGKLRDRE…LELEARELAD (323 aa)) forms a coiled coil. Positions 449–671 (SGEISLLKQQ…CLEEITATEI (223 aa)) are sufficient for interaction with CTNNB1. The sufficient for interaction with KATNB1 and for inhibition of katanin-mediated microtubule severing stretch occupies residues 452 to 671 (ISLLKQQLKE…CLEEITATEI (220 aa)). Ser572 carries the phosphoserine modification. Positions 633–642 (LEQELQQLSL) match the Nuclear export signal motif.

This sequence belongs to the LZTS2 family. Interacts with KATNB1. Also interacts with CTNNB1, gamma-tubulin and KIF23.

The protein resides in the cytoplasm. It is found in the cytoskeleton. It localises to the microtubule organizing center. The protein localises to the centrosome. Negative regulator of katanin-mediated microtubule severing and release from the centrosome. Required for central spindle formation and the completion of cytokinesis. May negatively regulate axonal outgrowth by preventing the formation of microtubule bundles that are necessary for transport within the elongating axon. Negative regulator of the Wnt signaling pathway. Represses beta-catenin-mediated transcriptional activation by promoting the nuclear exclusion of beta-catenin. In Mus musculus (Mouse), this protein is Leucine zipper putative tumor suppressor 2 (Lzts2).